We begin with the raw amino-acid sequence, 132 residues long: Small ribosomal subunit protein uS8 (132 aa).

This sequence belongs to the universal ribosomal protein uS8 family. In terms of assembly, part of the 30S ribosomal subunit. Contacts proteins S5 and S12.

In terms of biological role, one of the primary rRNA binding proteins, it binds directly to 16S rRNA central domain where it helps coordinate assembly of the platform of the 30S subunit. In Ehrlichia canis (strain Jake), this protein is Small ribosomal subunit protein uS8.